A 100-amino-acid polypeptide reads, in one-letter code: NAD(P)H-quinone oxidoreductase subunit 4L, chloroplastic (100 aa).

A run of 3 helical transmembrane segments spans residues 1 to 21 (MLEH…FGLI), 29 to 49 (ALMC…TFSN), and 60 to 80 (IFAI…LAIV).

It belongs to the complex I subunit 4L family. NDH is composed of at least 16 different subunits, 5 of which are encoded in the nucleus.

The protein resides in the plastid. It is found in the chloroplast thylakoid membrane. It carries out the reaction a plastoquinone + NADH + (n+1) H(+)(in) = a plastoquinol + NAD(+) + n H(+)(out). The catalysed reaction is a plastoquinone + NADPH + (n+1) H(+)(in) = a plastoquinol + NADP(+) + n H(+)(out). Functionally, NDH shuttles electrons from NAD(P)H:plastoquinone, via FMN and iron-sulfur (Fe-S) centers, to quinones in the photosynthetic chain and possibly in a chloroplast respiratory chain. The immediate electron acceptor for the enzyme in this species is believed to be plastoquinone. Couples the redox reaction to proton translocation, and thus conserves the redox energy in a proton gradient. This chain is NAD(P)H-quinone oxidoreductase subunit 4L, chloroplastic, found in Physcomitrium patens (Spreading-leaved earth moss).